Consider the following 1353-residue polypeptide: Protein timeless homolog (1353 aa).

Disordered regions lie at residues 798-825 (VAED…EEEV), 1150-1291 (KPTR…LEED), and 1306-1335 (GGSI…DPFT). Positions 802 to 825 (RAEDPDEEDPAEPYDSEQEEEEEV) are enriched in acidic residues. Composition is skewed to basic and acidic residues over residues 1150–1160 (KPTRQVERHLE) and 1168–1182 (ERSK…KFDD). Acidic residues-rich tracts occupy residues 1183 to 1206 (FLND…EEEE) and 1217 to 1226 (DSEDEEEHIE). The span at 1227 to 1239 (QEEAQKKLEKVAE) shows a compositional bias: basic and acidic residues. Acidic residues-rich tracts occupy residues 1261–1273 (DSSD…DSAE), 1282–1291 (AEDDSDLEED), and 1323–1332 (EEREDDDDED).

Belongs to the timeless family. As to quaternary structure, associates with the cohesin complex. Interacts with smc-1, smc-3, scc-1 and scc-3.

The protein resides in the nucleus. Plays an important role in chromosome cohesion during both mitosis and meiosis. In prophase of meiosis, it is involved in the formation of the synaptonemal complex (SC) and specifically, in the diplotene and diakinesis phases of prophase, it stabilizes the association of homologous chromosomes during synapsis and sister chromatid cohesion. It regulates cohesin subunits to promote meiotic chromosome cohesion and localizes non-SMC (structural maintenance of chromosome) cohesin subunits to chromatin prior to or during pre-meiotic S phase. Implicated in influencing either the stability or loading of meiotic-specific cohesin subunit, rec8. Controls cell cycle exit and cell fusion to prevent the premature differentiation into adult cells. Specifically, regulates hypodermal seam cell identity. The chain is Protein timeless homolog from Caenorhabditis elegans.